The following is a 384-amino-acid chain: GTPase Obg (384 aa).

The region spanning 1 to 159 is the Obg domain; sequence MKFIDEAKIE…RSLQLELKVL (159 aa). The tract at residues 20–46 is disordered; the sequence is ATSFRREKFVPRGGPDGGDGGKGGSVW. Positions 33–43 are enriched in gly residues; the sequence is GPDGGDGGKGG. Residues 160 to 348 enclose the OBG-type G domain; the sequence is ADVGLLGMPN…LVHQINQYLT (189 aa). GTP is bound by residues 166-173, 191-195, 213-216, 284-287, and 329-331; these read GMPNAGKS, FTTLH, DIPG, NKLD, and SAL. Mg(2+) contacts are provided by Ser-173 and Thr-193.

Belongs to the TRAFAC class OBG-HflX-like GTPase superfamily. OBG GTPase family. Monomer. Mg(2+) serves as cofactor.

It is found in the cytoplasm. An essential GTPase which binds GTP, GDP and possibly (p)ppGpp with moderate affinity, with high nucleotide exchange rates and a fairly low GTP hydrolysis rate. Plays a role in control of the cell cycle, stress response, ribosome biogenesis and in those bacteria that undergo differentiation, in morphogenesis control. In Neisseria meningitidis serogroup C / serotype 2a (strain ATCC 700532 / DSM 15464 / FAM18), this protein is GTPase Obg.